A 130-amino-acid chain; its full sequence is Small ribosomal subunit protein uS9 (130 aa).

Over residues 105-115 the composition is skewed to basic and acidic residues; sequence TRDSRQVERKK. Residues 105 to 130 form a disordered region; that stretch reads TRDSRQVERKKVGFRKSRKRTQFSKR. Positions 116–130 are enriched in basic residues; it reads VGFRKSRKRTQFSKR.

It belongs to the universal ribosomal protein uS9 family.

In Buchnera aphidicola subsp. Schizaphis graminum (strain Sg), this protein is Small ribosomal subunit protein uS9.